The primary structure comprises 482 residues: Rhamnulokinase (482 aa).

Residue 13–17 (ASSGR) participates in ATP binding. Residues G83 and 232–234 (HDT) contribute to the substrate site. Catalysis depends on D233, which acts as the Proton acceptor. ATP is bound at residue T255. N292 contacts substrate. Residue N300 coordinates ATP. The cysteines at positions 349 and 366 are disulfide-linked. G398 is a binding site for ATP. Residues C409 and C413 are joined by a disulfide bond.

The protein belongs to the rhamnulokinase family. It depends on Mg(2+) as a cofactor.

It carries out the reaction L-rhamnulose + ATP = L-rhamnulose 1-phosphate + ADP + H(+). Its pathway is carbohydrate degradation; L-rhamnose degradation; glycerone phosphate from L-rhamnose: step 2/3. Functionally, involved in the catabolism of L-rhamnose (6-deoxy-L-mannose). Catalyzes the transfer of the gamma-phosphate group from ATP to the 1-hydroxyl group of L-rhamnulose to yield L-rhamnulose 1-phosphate. The chain is Rhamnulokinase from Mannheimia succiniciproducens (strain KCTC 0769BP / MBEL55E).